A 150-amino-acid chain; its full sequence is 3-dehydroquinate dehydratase (150 aa).

Tyrosine 26 serves as the catalytic Proton acceptor. Residues asparagine 77, histidine 83, and aspartate 90 each contribute to the substrate site. Histidine 103 functions as the Proton donor in the catalytic mechanism. Residues 104–105 and arginine 114 each bind substrate; that span reads LS.

The protein belongs to the type-II 3-dehydroquinase family. Homododecamer.

The enzyme catalyses 3-dehydroquinate = 3-dehydroshikimate + H2O. It functions in the pathway metabolic intermediate biosynthesis; chorismate biosynthesis; chorismate from D-erythrose 4-phosphate and phosphoenolpyruvate: step 3/7. Catalyzes a trans-dehydration via an enolate intermediate. The polypeptide is 3-dehydroquinate dehydratase (Klebsiella pneumoniae (strain 342)).